The sequence spans 82 residues: Delta-actitoxin-Aeq2b 3 (82 aa).

A signal peptide spans 1 to 19; sequence MNRLMILVFAAVILALASA. Residues 20–26 constitute a propeptide that is removed on maturation; it reads DEDVDIT. Intrachain disulfides connect Cys32–Cys79, Cys34–Cys69, and Cys62–Cys80.

The protein belongs to the sea anemone sodium channel inhibitory toxin family. Type I subfamily.

The protein localises to the secreted. The protein resides in the nematocyst. In terms of biological role, binds specifically to voltage-gated sodium channels (Nav), thereby delaying their inactivation during signal transduction. Causes death to crabs. The sequence is that of Delta-actitoxin-Aeq2b 3 from Actinia equina (Beadlet anemone).